Reading from the N-terminus, the 192-residue chain is Pyridoxal 5'-phosphate synthase subunit PdxT (192 aa).

Residue 53–55 (GES) coordinates L-glutamine. Cys-85 functions as the Nucleophile in the catalytic mechanism. Residues Arg-112 and 140–141 (IR) contribute to the L-glutamine site. Active-site charge relay system residues include His-176 and Glu-178.

Belongs to the glutaminase PdxT/SNO family. As to quaternary structure, in the presence of PdxS, forms a dodecamer of heterodimers. Only shows activity in the heterodimer.

It carries out the reaction aldehydo-D-ribose 5-phosphate + D-glyceraldehyde 3-phosphate + L-glutamine = pyridoxal 5'-phosphate + L-glutamate + phosphate + 3 H2O + H(+). It catalyses the reaction L-glutamine + H2O = L-glutamate + NH4(+). It participates in cofactor biosynthesis; pyridoxal 5'-phosphate biosynthesis. Catalyzes the hydrolysis of glutamine to glutamate and ammonia as part of the biosynthesis of pyridoxal 5'-phosphate. The resulting ammonia molecule is channeled to the active site of PdxS. This is Pyridoxal 5'-phosphate synthase subunit PdxT from Natronomonas pharaonis (strain ATCC 35678 / DSM 2160 / CIP 103997 / JCM 8858 / NBRC 14720 / NCIMB 2260 / Gabara) (Halobacterium pharaonis).